Reading from the N-terminus, the 214-residue chain is Probable GTP-binding protein EngB (214 aa).

Positions 22 to 194 (HLPEIAFAGR…WARIDALLEP (173 aa)) constitute an EngB-type G domain. Residues 30–37 (GRSNVGKS), 57–61 (GRTQL), 75–78 (DLPG), 142–145 (TKCD), and 173–175 (FSA) contribute to the GTP site. The Mg(2+) site is built by S37 and T59. The disordered stretch occupies residues 195-214 (TAAETPGIPEEPAPPGPVND). The span at 203-214 (PEEPAPPGPVND) shows a compositional bias: pro residues.

The protein belongs to the TRAFAC class TrmE-Era-EngA-EngB-Septin-like GTPase superfamily. EngB GTPase family. Mg(2+) serves as cofactor.

Necessary for normal cell division and for the maintenance of normal septation. In Geobacter sp. (strain M21), this protein is Probable GTP-binding protein EngB.